A 477-amino-acid polypeptide reads, in one-letter code: UDP-N-acetylmuramoylalanine--D-glutamate ligase (477 aa).

125–131 (GTNGKST) is an ATP binding site.

It belongs to the MurCDEF family.

The protein localises to the cytoplasm. It catalyses the reaction UDP-N-acetyl-alpha-D-muramoyl-L-alanine + D-glutamate + ATP = UDP-N-acetyl-alpha-D-muramoyl-L-alanyl-D-glutamate + ADP + phosphate + H(+). Its pathway is cell wall biogenesis; peptidoglycan biosynthesis. Its function is as follows. Cell wall formation. Catalyzes the addition of glutamate to the nucleotide precursor UDP-N-acetylmuramoyl-L-alanine (UMA). The protein is UDP-N-acetylmuramoylalanine--D-glutamate ligase of Rhodospirillum rubrum (strain ATCC 11170 / ATH 1.1.1 / DSM 467 / LMG 4362 / NCIMB 8255 / S1).